We begin with the raw amino-acid sequence, 85 residues long: Growth factor (85 aa).

A signal peptide spans 1 to 19 (MVPRDLVATLLCAMCIVQA). An EGF-like domain is found at 33–77 (RIKLCNDDYKNYCLNNGTCFTVALNNVSLNPFCACHINYVGSRCQ). 3 disulfides stabilise this stretch: cysteine 37–cysteine 51, cysteine 45–cysteine 65, and cysteine 67–cysteine 76. Residues asparagine 48 and asparagine 58 are each glycosylated (N-linked (GlcNAc...) asparagine; by host).

Its subcellular location is the secreted. Stimulates the growth of some tissues. This is Growth factor (MGF) from Oryctolagus cuniculus (Rabbit).